The sequence spans 432 residues: 5-hydroxybenzimidazole synthase BzaA (432 aa).

Residues Met95, Tyr124, His163, 185–187 (SYG), and 226–229 (DGMR) contribute to the substrate site. A Zn(2+)-binding site is contributed by His269. Substrate is bound at residue Phe292. His333 provides a ligand contact to Zn(2+). 3 residues coordinate [4Fe-4S] cluster: Cys409, Cys412, and Cys416.

This sequence belongs to the ThiC family. 5-hydroxybenzimidazole synthase subfamily. Requires [4Fe-4S] cluster as cofactor.

The enzyme catalyses 5-amino-1-(5-phospho-beta-D-ribosyl)imidazole + AH2 + S-adenosyl-L-methionine = 5-hydroxybenzimidazole + 5'-deoxyadenosine + formate + L-methionine + A + NH4(+) + phosphate + 2 H(+). Functionally, together with BzaB, probably catalyzes the conversion of aminoimidazole ribotide (AIR) to 5-hydroxybenzimidazole (5-HBI) in a radical S-adenosyl-L-methionine (SAM)-dependent reaction. Is thus involved in the anaerobic biosynthesis of the benzimidazole lower axial ligand of the cobamide produced by M.thermoacetica. Requires BzaB for catalytic activity, as BzaA alone displays no activity. This Moorella thermoacetica (strain ATCC 39073 / JCM 9320) protein is 5-hydroxybenzimidazole synthase BzaA.